We begin with the raw amino-acid sequence, 284 residues long: Tropomyosin (284 aa).

Residues 1–284 adopt a coiled-coil conformation; it reads MDGIKKKMIA…DQTFAELTGY (284 aa). Residues 111–131 are disordered; it reads TKLEEASKTAEESERGRKDLE.

It belongs to the tropomyosin family. Homodimer.

In terms of biological role, tropomyosin, in association with the troponin complex, plays a central role in the calcium dependent regulation of muscle contraction. This chain is Tropomyosin, found in Schistosoma haematobium (Blood fluke).